Consider the following 918-residue polypeptide: Valine--tRNA ligase (918 aa).

A 'HIGH' region motif is present at residues 50 to 60 (PNVTGSLHMGH). A 'KMSKS' region motif is present at residues 548 to 552 (KMSKS). K551 serves as a coordination point for ATP. The stretch at 849–883 (NDFVNLEALKDRLTKDLKKVNSDIETLNKRISNKN) forms a coiled coil.

Belongs to the class-I aminoacyl-tRNA synthetase family. ValS type 1 subfamily. In terms of assembly, monomer.

The protein localises to the cytoplasm. The catalysed reaction is tRNA(Val) + L-valine + ATP = L-valyl-tRNA(Val) + AMP + diphosphate. In terms of biological role, catalyzes the attachment of valine to tRNA(Val). As ValRS can inadvertently accommodate and process structurally similar amino acids such as threonine, to avoid such errors, it has a 'posttransfer' editing activity that hydrolyzes mischarged Thr-tRNA(Val) in a tRNA-dependent manner. In Prochlorococcus marinus subsp. pastoris (strain CCMP1986 / NIES-2087 / MED4), this protein is Valine--tRNA ligase.